We begin with the raw amino-acid sequence, 1158 residues long: Putative HERC2-like protein 3 (1158 aa).

The tract at residues 281–302 is disordered; that stretch reads PRKKRVPKKPESTDDEEKIGNE. Residues 293–302 are compositionally biased toward acidic residues; sequence TDDEEKIGNE. The 74-residue stretch at 587 to 660 folds into the MIB/HERC2 domain; it reads SGPELAAMMK…NYDLKLAELP (74 aa). The disordered stretch occupies residues 662–684; sequence PAQPSAEDSDTEDDSEAEQTERN. Acidic residues predominate over residues 668 to 679; sequence EDSDTEDDSEAE.

In Homo sapiens (Human), this protein is Putative HERC2-like protein 3 (HERC2P3).